Reading from the N-terminus, the 283-residue chain is Phosphatidylglycerol--prolipoprotein diacylglyceryl transferase (283 aa).

A run of 7 helical transmembrane segments spans residues 21 to 41 (IEVHWYGLAYACAIVIAFYMA), 62 to 82 (YFLWAELGIVLGARIGYILIY), 106 to 126 (FIGIRGMSYHGGLVGFLIASY), 136 to 156 (LLIYLDLIAISLPLGYVFGRI), 190 to 210 (PSQLIEAFLEGVIVFLMVMWA), 218 to 238 (GLLIVVYGLGYSLMRFIAEFY), and 252 to 272 (LSMGQILSLFMVIVSLGILLY). Position 155 (arginine 155) interacts with a 1,2-diacyl-sn-glycero-3-phospho-(1'-sn-glycerol).

The protein belongs to the Lgt family.

The protein localises to the cell inner membrane. It carries out the reaction L-cysteinyl-[prolipoprotein] + a 1,2-diacyl-sn-glycero-3-phospho-(1'-sn-glycerol) = an S-1,2-diacyl-sn-glyceryl-L-cysteinyl-[prolipoprotein] + sn-glycerol 1-phosphate + H(+). It participates in protein modification; lipoprotein biosynthesis (diacylglyceryl transfer). Its function is as follows. Catalyzes the transfer of the diacylglyceryl group from phosphatidylglycerol to the sulfhydryl group of the N-terminal cysteine of a prolipoprotein, the first step in the formation of mature lipoproteins. This is Phosphatidylglycerol--prolipoprotein diacylglyceryl transferase from Helicobacter acinonychis (strain Sheeba).